Reading from the N-terminus, the 115-residue chain is U3-lycotoxin-Ls1k (115 aa).

The signal sequence occupies residues 1-20 (MKFELLFGVLLVTLFSYSSA). Positions 21–44 (EMLDDFDQADEDELLSLIEKEEAR) are excised as a propeptide. Cystine bridges form between cysteine 48–cysteine 63, cysteine 55–cysteine 72, cysteine 62–cysteine 87, and cysteine 74–cysteine 85.

This sequence belongs to the neurotoxin 19 (CSTX) family. 01 subfamily. As to expression, expressed by the venom gland.

It localises to the secreted. The sequence is that of U3-lycotoxin-Ls1k from Lycosa singoriensis (Wolf spider).